The sequence spans 32 residues: Dermaseptin-DA4 (32 aa).

As to expression, expressed by the skin glands.

It is found in the secreted. Its subcellular location is the target cell membrane. In terms of biological role, antimicrobial peptide with activity against Gram-negative bacteria, but not against Gram-positive bacteria. Active against E.coli (MIC=5 uM), and P.aeruginosa (MIC=40 uM). Acts by disrupting cell membranes. Is able to depolarize membranes of Gram-positive and Gram-negative bacteria. Also acts as a potent chemoattractant for human leukocytes and activates them mainly through a GPCR, possibly FPRL1 coupled to the ERK1/2 MAPK pathway. Is unstructured in water but become helical upon binding to anionic lipids. In contrast to most dermaseptins, is not structured in the presence of zwitterionic lipids. Does not show hemolytic activity. The polypeptide is Dermaseptin-DA4 (Agalychnis dacnicolor (Giant Mexican leaf frog)).